The following is a 105-amino-acid chain: Small cysteine and glycine repeat-containing protein 4 (105 aa).

The 14 X 2 AA repeats of CG stretch occupies residues 4–87 (CGCGSCGGCG…RRTCGSCGCG (84 aa)).

This sequence belongs to the KRTAP type 28 family.

In terms of biological role, in the hair cortex, hair keratin intermediate filaments are embedded in an interfilamentous matrix, consisting of hair keratin-associated proteins (KRTAP), which are essential for the formation of a rigid and resistant hair shaft through their extensive disulfide bond cross-linking with abundant cysteine residues of hair keratins. The matrix proteins include the high-sulfur and high-glycine-tyrosine keratins. This is Small cysteine and glycine repeat-containing protein 4 from Homo sapiens (Human).